We begin with the raw amino-acid sequence, 192 residues long: A-type ATP synthase subunit E (192 aa).

The protein belongs to the V-ATPase E subunit family. As to quaternary structure, has multiple subunits with at least A(3), B(3), C, D, E, F, H, I and proteolipid K(x).

Its subcellular location is the cell membrane. In terms of biological role, component of the A-type ATP synthase that produces ATP from ADP in the presence of a proton gradient across the membrane. The chain is A-type ATP synthase subunit E from Methanoculleus marisnigri (strain ATCC 35101 / DSM 1498 / JR1).